The sequence spans 491 residues: Endoglucanase 14 (491 aa).

The N-terminal stretch at M1–S31 is a signal peptide. Residue D86 is the Nucleophile of the active site. An N-linked (GlcNAc...) asparagine glycan is attached at N397. Active-site residues include H413, D465, and E474.

Belongs to the glycosyl hydrolase 9 (cellulase E) family.

It localises to the secreted. The catalysed reaction is Endohydrolysis of (1-&gt;4)-beta-D-glucosidic linkages in cellulose, lichenin and cereal beta-D-glucans.. This chain is Endoglucanase 14, found in Arabidopsis thaliana (Mouse-ear cress).